The following is a 577-amino-acid chain: Aspartate--tRNA ligase (577 aa).

Glutamate 169 contributes to the L-aspartate binding site. The interval 193–196 (QLYK) is aspartate. Arginine 215 is an L-aspartate binding site. Residues 215-217 (RDE) and glutamine 224 each bind ATP. Histidine 440 serves as a coordination point for L-aspartate. Glutamate 474 is an ATP binding site. Arginine 481 is an L-aspartate binding site. 526–529 (GIDR) lines the ATP pocket.

It belongs to the class-II aminoacyl-tRNA synthetase family. Type 1 subfamily. Homodimer.

It is found in the cytoplasm. It catalyses the reaction tRNA(Asp) + L-aspartate + ATP = L-aspartyl-tRNA(Asp) + AMP + diphosphate. Its function is as follows. Catalyzes the attachment of L-aspartate to tRNA(Asp) in a two-step reaction: L-aspartate is first activated by ATP to form Asp-AMP and then transferred to the acceptor end of tRNA(Asp). The protein is Aspartate--tRNA ligase of Mesoplasma florum (strain ATCC 33453 / NBRC 100688 / NCTC 11704 / L1) (Acholeplasma florum).